Reading from the N-terminus, the 256-residue chain is DNA repair protein RecO (256 aa).

The protein belongs to the RecO family.

In terms of biological role, involved in DNA repair and RecF pathway recombination. The protein is DNA repair protein RecO of Thiobacillus denitrificans (strain ATCC 25259 / T1).